A 308-amino-acid polypeptide reads, in one-letter code: tRNA dimethylallyltransferase (308 aa).

8–15 (GPTGTGKS) serves as a coordination point for ATP. Substrate is bound at residue 10-15 (TGTGKS).

It belongs to the IPP transferase family. As to quaternary structure, monomer. Requires Mg(2+) as cofactor.

It carries out the reaction adenosine(37) in tRNA + dimethylallyl diphosphate = N(6)-dimethylallyladenosine(37) in tRNA + diphosphate. Its function is as follows. Catalyzes the transfer of a dimethylallyl group onto the adenine at position 37 in tRNAs that read codons beginning with uridine, leading to the formation of N6-(dimethylallyl)adenosine (i(6)A). The protein is tRNA dimethylallyltransferase of Mycolicibacterium vanbaalenii (strain DSM 7251 / JCM 13017 / BCRC 16820 / KCTC 9966 / NRRL B-24157 / PYR-1) (Mycobacterium vanbaalenii).